A 348-amino-acid polypeptide reads, in one-letter code: Phosphoribosylformylglycinamidine cyclo-ligase (348 aa).

The protein belongs to the AIR synthase family.

The protein resides in the cytoplasm. It catalyses the reaction 2-formamido-N(1)-(5-O-phospho-beta-D-ribosyl)acetamidine + ATP = 5-amino-1-(5-phospho-beta-D-ribosyl)imidazole + ADP + phosphate + H(+). It functions in the pathway purine metabolism; IMP biosynthesis via de novo pathway; 5-amino-1-(5-phospho-D-ribosyl)imidazole from N(2)-formyl-N(1)-(5-phospho-D-ribosyl)glycinamide: step 2/2. The chain is Phosphoribosylformylglycinamidine cyclo-ligase from Geobacter metallireducens (strain ATCC 53774 / DSM 7210 / GS-15).